The following is a 977-amino-acid chain: Glycine dehydrogenase (decarboxylating) (977 aa).

Lysine 702 is modified (N6-(pyridoxal phosphate)lysine).

It belongs to the GcvP family. The glycine cleavage system is composed of four proteins: P, T, L and H. The cofactor is pyridoxal 5'-phosphate.

It catalyses the reaction N(6)-[(R)-lipoyl]-L-lysyl-[glycine-cleavage complex H protein] + glycine + H(+) = N(6)-[(R)-S(8)-aminomethyldihydrolipoyl]-L-lysyl-[glycine-cleavage complex H protein] + CO2. Functionally, the glycine cleavage system catalyzes the degradation of glycine. The P protein binds the alpha-amino group of glycine through its pyridoxal phosphate cofactor; CO(2) is released and the remaining methylamine moiety is then transferred to the lipoamide cofactor of the H protein. The chain is Glycine dehydrogenase (decarboxylating) from Xanthomonas axonopodis pv. citri (strain 306).